The sequence spans 410 residues: Peptidase T (410 aa).

H79 provides a ligand contact to Zn(2+). D81 is a catalytic residue. A Zn(2+)-binding site is contributed by D142. E176 acts as the Proton acceptor in catalysis. Zn(2+) is bound by residues E177, D199, and H381.

It belongs to the peptidase M20B family. Zn(2+) serves as cofactor.

It localises to the cytoplasm. It catalyses the reaction Release of the N-terminal residue from a tripeptide.. In terms of biological role, cleaves the N-terminal amino acid of tripeptides. The sequence is that of Peptidase T from Bacillus anthracis (strain A0248).